The primary structure comprises 430 residues: uncharacterized protein (430 aa).

The next 12 helical transmembrane spans lie at 36–56 (LFVV…GVTV), 69–89 (AFAG…ALIV), 100–122 (TGLS…AAII), 126–148 (FLLF…ARYA), 160–180 (TAVS…PSLV), 197–217 (GPFI…FIML), 253–273 (IIVG…IMTM), 285–305 (LGAV…PSLV), 317–337 (AMAI…AFAP), 340–360 (SMIL…FGLI), 384–404 (VLIA…VAGS), and 406–426 (YLAL…VVVW).

It belongs to the major facilitator superfamily.

Its subcellular location is the cell membrane. This is an uncharacterized protein from Bacillus subtilis (strain 168).